Here is a 67-residue protein sequence, read N- to C-terminus: ATP synthase F(0) complex subunit 8 (67 aa).

The chain crosses the membrane as a helical span at residues 8 to 24 (TWFITIISSMATLFILF). At Lys54 the chain carries N6-acetyllysine; alternate. N6-succinyllysine; alternate is present on Lys54. Lys57 bears the N6-acetyllysine mark.

It belongs to the ATPase protein 8 family. As to quaternary structure, component of the ATP synthase complex composed at least of ATP5F1A/subunit alpha, ATP5F1B/subunit beta, ATP5MC1/subunit c (homooctomer), MT-ATP6/subunit a, MT-ATP8/subunit 8, ATP5ME/subunit e, ATP5MF/subunit f, ATP5MG/subunit g, ATP5MK/subunit k, ATP5MJ/subunit j, ATP5F1C/subunit gamma, ATP5F1D/subunit delta, ATP5F1E/subunit epsilon, ATP5PF/subunit F6, ATP5PB/subunit b, ATP5PD/subunit d, ATP5PO/subunit OSCP. ATP synthase complex consists of a soluble F(1) head domain (subunits alpha(3) and beta(3)) - the catalytic core - and a membrane F(0) domain - the membrane proton channel (subunits c, a, 8, e, f, g, k and j). These two domains are linked by a central stalk (subunits gamma, delta, and epsilon) rotating inside the F1 region and a stationary peripheral stalk (subunits F6, b, d, and OSCP). Interacts with PRICKLE3.

The protein resides in the mitochondrion membrane. Its function is as follows. Subunit 8, of the mitochondrial membrane ATP synthase complex (F(1)F(0) ATP synthase or Complex V) that produces ATP from ADP in the presence of a proton gradient across the membrane which is generated by electron transport complexes of the respiratory chain. ATP synthase complex consist of a soluble F(1) head domain - the catalytic core - and a membrane F(1) domain - the membrane proton channel. These two domains are linked by a central stalk rotating inside the F(1) region and a stationary peripheral stalk. During catalysis, ATP synthesis in the catalytic domain of F(1) is coupled via a rotary mechanism of the central stalk subunits to proton translocation. In vivo, can only synthesize ATP although its ATP hydrolase activity can be activated artificially in vitro. Part of the complex F(0) domain. This is ATP synthase F(0) complex subunit 8 from Rattus norvegicus (Rat).